The sequence spans 70 residues: Melittin-N (70 aa).

Residues 1–21 (MKFLVNVALVFMVVYISYIYA) form the signal peptide. The propeptide at 22–43 (APEPEPAPEPEAEADAEADPEA) is removed by a dipeptidylpeptidase. Gly-44 carries the N-formylglycine; partial modification. Gln-69 is modified (glutamine amide).

Belongs to the melittin family. In terms of assembly, monomer (in solution and for integration into membranes), homotetramer (in solution and potentially as a toroidal pore in membranes), and potenially homomultimer (as a toroidal pore in membranes). As to expression, expressed by the venom gland.

The protein resides in the secreted. The protein localises to the target cell membrane. Functionally, main toxin of bee venom with strong hemolytic activity and antimicrobial activity. It has enhancing effects on bee venom phospholipase A2 activity. This amphipathic toxin binds to negatively charged membrane surface and forms pore by inserting into lipid bilayers inducing the leakage of ions and molecules and the enhancement of permeability that ultimately leads to cell lysis. It acts as a voltage-gated pore with higher selectivity for anions over cations. The ion conductance has been shown to be voltage-dependent. Self-association of melittin in membranes is promoted by high ionic strength, but not by the presence of negatively charged lipids. In vivo, intradermal injection into healthy human volunteers produce sharp pain sensation and an inflammatory response. It produces pain by activating primary nociceptor cells directly and indirectly due to its ability to activate plasma membrane phospholipase A2 and its pore-forming activity. Shows lower cytotoxicity when tested on E.coli and cancer cell lines than melittin, as well as lower anti-inflammatory properties and lower properties to interact to small unilamellar liposomes. In Apis cerana (Indian honeybee), this protein is Melittin-N (MELT).